The primary structure comprises 822 residues: MMLLSSSYSGGQFPGVSPLGTRPKRSTTVVPRPVVTRATAGGVRNNLEVVGNAGTLQGMDIDELRVIVRKQLQGVELSPSSYDTAWVAMVPVQGSRQSPCFPQCVEWILQNQQEDGSWGHSAGPSGEVNKDILLSTLACVLALNIWNVGQDHIRRGLSFIGRNFSVAIDGQCAAPVGFNITFSGMLRLAIGMGLKFPVMETDIDSIFRLREVEFERDAGGTASARKAFMAYVSEGLGREQDWDHVMAYQRKNGSLFNSPSTTAASAIHSCNDRALDYLVSLTSKLGGPVPAIYPDKVYSQLCMVDTLEKMGISSDFACDIRDILDMTYSCWMQDEEEIMLDMATCAKAFRLLRMHGYDVSSEGMARFAERSSFDDSIHAYLNDTKPLLELYKSSQVHFLEEDFILENIGSWSAKLLKQQLSFNKISKSLMPEVEYALKYPFYATVEVLEHKGNIERFNVNGFQRLKSGYCGSGADKEILALAVNKFHYAQSVYQQELRYLESWVAEFRLDELKFARVIPLQSLLSAVVPLFPCELSDARIAWSQNAILTAVVDDLFDGGGSMEEMLNLVALFDKWDDHGEIGFCSSNVEIMFNAVYNTTKRIGAKAALVQKRCVIDHIAEQWQVMVRAMLTEAEWAAGKHIPATMGEYMSVAEPSFALGPIVPVSAYLLGEELPEEAVRSPEYGRLLGLASAVGRLLNDVMTYEKEMGTGKLNSVVLLQPLAAGGAASRGGGGAPAPAPASVEAARAEVRRAIQASWRDLHGLVFGSGGGSSSSIIPRPCREVFWHTGKVASVFYQEGDGYARKAMRSMANAVILEPLHLQE.

Residues 1–10 are compositionally biased toward polar residues; sequence MMLLSSSYSG. The segment at 1–29 is disordered; sequence MMLLSSSYSGGQFPGVSPLGTRPKRSTTV. Mg(2+) contacts are provided by Asp-553, Asp-557, Asn-698, Thr-702, and Glu-706. The DDXXD motif signature appears at 553-557; it reads DDLFD.

This sequence belongs to the terpene synthase family. Mg(2+) serves as cofactor.

It catalyses the reaction 9alpha-copalyl diphosphate = stemar-13-ene + diphosphate. Catalyzes the conversion of syn-copalyl diphosphate to the phytoalexin precursor stemarene. The protein is Stemar-13-ene synthase (KSL8) of Oryza sativa subsp. japonica (Rice).